Here is a 1333-residue protein sequence, read N- to C-terminus: Elongator complex protein 1 (1333 aa).

Residues Ser805, Ser868, Ser1172, and Ser1175 each carry the phosphoserine modification. Residues 886-1333 form a mediates dimerization region; sequence VDVNELYDHS…KTQWKLSLLE (448 aa). The interval 1177–1209 is disordered; sequence SEMSSKYSHSNSRISARSSKNRRKAERKKHSLK. The tract at residues 1192–1210 is required for binding to tRNA; the sequence is ARSSKNRRKAERKKHSLKE. The segment covering 1195–1207 has biased composition (basic residues); it reads SKNRRKAERKKHS.

Belongs to the ELP1/IKA1 family. As to quaternary structure, homodimer; dimerization promotes ELP1 stability and elongator complex formation. Component of the elongator complex which consists of ELP1, ELP2, ELP3, ELP4, ELP5 and ELP6. Interacts preferentially with MAP3K14/NIK followed by IKK-alpha and IKK-beta. Phosphorylated.

It is found in the cytoplasm. Its subcellular location is the nucleus. It participates in tRNA modification; 5-methoxycarbonylmethyl-2-thiouridine-tRNA biosynthesis. Component of the elongator complex which is required for multiple tRNA modifications, including mcm5U (5-methoxycarbonylmethyl uridine), mcm5s2U (5-methoxycarbonylmethyl-2-thiouridine), and ncm5U (5-carbamoylmethyl uridine). The elongator complex catalyzes the formation of carboxymethyluridine in the wobble base at position 34 in tRNAs. Regulates the migration and branching of projection neurons in the developing cerebral cortex, through a process depending on alpha-tubulin acetylation. ELP1 binds to tRNA, mediating interaction of the elongator complex with tRNA. May act as a scaffold protein that assembles active IKK-MAP3K14 complexes (IKKA, IKKB and MAP3K14/NIK). The chain is Elongator complex protein 1 (ELP1) from Oryctolagus cuniculus (Rabbit).